The chain runs to 151 residues: Nucleoside diphosphate kinase (151 aa).

The ATP site is built by Lys10, Phe58, Arg86, Thr92, Arg103, and Asn113. His116 serves as the catalytic Pros-phosphohistidine intermediate.

This sequence belongs to the NDK family. In terms of assembly, homotetramer. It depends on Mg(2+) as a cofactor.

The protein localises to the cytoplasm. It catalyses the reaction dZDP + ATP = dZTP + ADP. The catalysed reaction is a 2'-deoxyribonucleoside 5'-diphosphate + ATP = a 2'-deoxyribonucleoside 5'-triphosphate + ADP. It carries out the reaction a ribonucleoside 5'-diphosphate + ATP = a ribonucleoside 5'-triphosphate + ADP. Its pathway is purine metabolism. In terms of biological role, major role in the synthesis of nucleoside triphosphates other than ATP. The ATP gamma phosphate is transferred to the NDP beta phosphate via a ping-pong mechanism, using a phosphorylated active-site intermediate. Functionally, (Microbial infection) Catalyzes the phosphorylation of dZDP to dZTP, when the bacterium is infected by a phage that produces the substrate for the synthesis of dZTP (2- amino-2'-deoxyadenosine 5'-triphosphate), which is then used by the phage as a DNA polymerase substrate. In Synechococcus sp. (strain CC9902), this protein is Nucleoside diphosphate kinase.